Here is a 143-residue protein sequence, read N- to C-terminus: 3-hydroxyacyl-[acyl-carrier-protein] dehydratase FabZ (143 aa).

Residue His49 is part of the active site.

Belongs to the thioester dehydratase family. FabZ subfamily.

Its subcellular location is the cytoplasm. The enzyme catalyses a (3R)-hydroxyacyl-[ACP] = a (2E)-enoyl-[ACP] + H2O. Its function is as follows. Involved in unsaturated fatty acids biosynthesis. Catalyzes the dehydration of short chain beta-hydroxyacyl-ACPs and long chain saturated and unsaturated beta-hydroxyacyl-ACPs. The chain is 3-hydroxyacyl-[acyl-carrier-protein] dehydratase FabZ from Wolbachia pipientis subsp. Culex pipiens (strain wPip).